A 389-amino-acid chain; its full sequence is Na(+)/H(+) antiporter NhaA (389 aa).

Helical transmembrane passes span Ile8–Trp28, Ile48–Ile68, Met91–Ile111, Gly119–Phe139, Asn173–Leu193, Ala214–Leu234, Trp262–Phe282, Leu288–Gly308, Leu327–Val347, and Gly361–Ile381.

It belongs to the NhaA Na(+)/H(+) (TC 2.A.33) antiporter family.

Its subcellular location is the cell membrane. The catalysed reaction is Na(+)(in) + 2 H(+)(out) = Na(+)(out) + 2 H(+)(in). In terms of biological role, na(+)/H(+) antiporter that extrudes sodium in exchange for external protons. The polypeptide is Na(+)/H(+) antiporter NhaA (Desulfitobacterium hafniense (strain DSM 10664 / DCB-2)).